Here is a 77-residue protein sequence, read N- to C-terminus: Large ribosomal subunit protein eL20 (77 aa).

It belongs to the eukaryotic ribosomal protein eL20 family. As to quaternary structure, part of the 50S ribosomal subunit. Binds 23S rRNA.

This chain is Large ribosomal subunit protein eL20, found in Thermococcus gammatolerans (strain DSM 15229 / JCM 11827 / EJ3).